The primary structure comprises 188 residues: COMM domain-containing protein 1 (188 aa).

The interval 1–122 is sufficient for interaction with SLC12A2; it reads MAAELEGSKC…CWDRGLRSLS (122 aa). The Cu cation site is built by His100, Met109, and His133. The COMM domain maps to 117–185; that stretch reads GLRSLSWRVD…EVEESISTLM (69 aa). Residues 124–188 are required for binding to PtdIns(4,5)P2; that stretch reads RVDGKSQSRH…ESISTLMQPA (65 aa).

It belongs to the COMM domain-containing protein 1 family. Component of the commander complex consisting of the CCC subcomplex and the retriever subcomplex. Component of the CCC (COMMD/CCDC22/CCDC93) subcomplex consisting of COMMD1, COMMD2, COMMD3, COMMD4, COMMD5, COMMD6, COMMD7, COMMD8, COMMD9, COMMD10, CCDC22 and CCDC93; within the complex forms a heterodimer with COMMD6. Interacts with VPS35L; the interaction associates the CCC complex with the retriever complex. Identified in a complex with an E3 ubiquitin ligase complex composed of TCEB1/elongin C, CUL2, SOCS1 and RBX1; in the complex interacts directly with SOCS1 and CUL2. Identified in a complex with NF-kappa-B. Interacts directly with SLC12A2. Interacts directly with ATP7B (via the N-terminal region). Interacts with ATP7A. Interacts with FAM107A; this interaction stabilizes COMMD1 in the nucleus. Interacts with CCS, CDKN2A, RELA, REL, RELB, NFKB1/p105, NFKB2/p100, NFKBIB, SCNN1D, SCNN1B, CFTR, CLU, SGK1, AKT1, CUL1, CUL2, CUL3, CUL4A, CUL4B, CUL5, CUL7, HIF1A. Post-translationally, ubiquitinated; undergoes both 'Lys-63'- and 'Lys-48'-linked polyubiquitination. Ubiquitinated by XIAP, leading to its proteasomal degradation.

It is found in the nucleus. Its subcellular location is the cytoplasm. The protein localises to the endosome membrane. It localises to the cytoplasmic vesicle. The protein resides in the early endosome. It is found in the recycling endosome. In terms of biological role, scaffold protein in the commander complex that is essential for endosomal recycling of transmembrane cargos; the commander complex is composed of the CCC subcomplex and the retriever subcomplex. Can modulate activity of cullin-RING E3 ubiquitin ligase (CRL) complexes by displacing CAND1; in vitro promotes CRL E3 activity and dissociates CAND1 from CUL1 and CUL2. Promotes ubiquitination of NF-kappa-B subunit RELA and its subsequent proteasomal degradation. Down-regulates NF-kappa-B activity. Involved in the regulation of membrane expression and ubiquitination of SLC12A2. Modulates Na(+) transport in epithelial cells by regulation of apical cell surface expression of amiloride-sensitive sodium channel (ENaC) subunits and by promoting their ubiquitination presumably involving NEDD4L. Promotes the localization of SCNN1D to recycling endosomes. Promotes CFTR cell surface expression through regulation of its ubiquitination. Down-regulates SOD1 activity by interfering with its homodimerization. Plays a role in copper ion homeostasis. Involved in copper-dependent ATP7A trafficking between the trans-Golgi network and vesicles in the cell periphery; the function is proposed to depend on its association within the CCC complex and cooperation with the WASH complex on early endosomes. Can bind one copper ion per monomer. May function to facilitate biliary copper excretion within hepatocytes. Binds to phosphatidylinositol 4,5-bisphosphate (PtdIns(4,5)P2). Involved in the regulation of HIF1A-mediated transcription; competes with ARNT/Hif-1-beta for binding to HIF1A resulting in decreased DNA binding and impaired transcriptional activation by HIF-1. Negatively regulates neuroblastoma G1/S phase cell cycle progression and cell proliferation by stimulating ubiquitination of NF-kappa-B subunit RELA and NF-kappa-B degradation in a FAM107A- and actin-dependent manner. In Bos taurus (Bovine), this protein is COMM domain-containing protein 1 (COMMD1).